The chain runs to 129 residues: Follitropin subunit beta (129 aa).

The N-terminal stretch at 1 to 20 is a signal peptide; sequence MKSVQFCFLFCCWRAICCRS. 6 disulfides stabilise this stretch: cysteine 21-cysteine 69, cysteine 35-cysteine 84, cysteine 38-cysteine 122, cysteine 46-cysteine 100, cysteine 50-cysteine 102, and cysteine 105-cysteine 112. N-linked (GlcNAc...) asparagine glycans are attached at residues asparagine 25 and asparagine 42.

This sequence belongs to the glycoprotein hormones subunit beta family. Heterodimer. The active follitropin is a heterodimer composed of an alpha chain/CGA shared with other hormones and a unique beta chain/FSHB shown here.

The protein resides in the secreted. Its function is as follows. Together with the alpha chain CGA constitutes follitropin, the follicle-stimulating hormone, and provides its biological specificity to the hormone heterodimer. Binds FSHR, a G protein-coupled receptor, on target cells to activate downstream signaling pathways. Follitropin is involved in follicle development and spermatogenesis in reproductive organs. In Bos taurus (Bovine), this protein is Follitropin subunit beta (FSHB).